Here is a 106-residue protein sequence, read N- to C-terminus: Isocitrate dehydrogenase [NAD] subunit gamma, mitochondrial (106 aa).

Belongs to the isocitrate and isopropylmalate dehydrogenases family. As to quaternary structure, heterooligomer of subunits alpha (IDH3A), beta (IDH3B), and gamma (IDH3G) in the apparent ratio of 2:1:1. The heterodimer containing one IDH3A and one IDH3B subunit and the heterodimer containing one IDH3A and one IDH3G subunit assemble into a heterotetramer (which contains two subunits of IDH3A, one of IDH3B and one of IDH3G) and further into the heterooctamer.

Its subcellular location is the mitochondrion. With respect to regulation, the heterotetramer and the heterodimer composed of IDH3A and IDH3G subunits can be allosterically activated by citrate (CIT) or/and ADP, and the two activators can act independently or synergistically. The heterodimer composed of IDH3A and IDH3B subunits cannot be allosterically regulated and the allosteric regulation of the heterotetramer is through the IDH3G subunit and not the IDH3B subunit. The IDH3G subunit contains the allosteric site which consists of a CIT-binding site and an ADP-binding site, and the binding of CIT and ADP causes conformational changes at the allosteric site which are transmitted to the active site in the catalytic subunit (IDH3A) through a cascade of conformational changes at the heterodimer interface, leading to stabilization of the isocitrate-binding at the active site and thus activation of the enzyme. ATP can activate the heterotetramer and the heterodimer composed of IDH3A and IDH3G subunits at low concentrations but inhibits their activities at high concentrations, whereas ATP exhibits only inhibitory effect on the heterodimer composed of IDH3A and IDH3B subunits. Functionally, regulatory subunit which plays a role in the allosteric regulation of the enzyme catalyzing the decarboxylation of isocitrate (ICT) into alpha-ketoglutarate. The heterodimer composed of the alpha (IDH3A) and beta (IDH3B) subunits and the heterodimer composed of the alpha (IDH3A) and gamma (IDH3G) subunits, have considerable basal activity but the full activity of the heterotetramer (containing two subunits of IDH3A, one of IDH3B and one of IDH3G) requires the assembly and cooperative function of both heterodimers. This chain is Isocitrate dehydrogenase [NAD] subunit gamma, mitochondrial (IDH3G), found in Sus scrofa (Pig).